Consider the following 151-residue polypeptide: MAKPHCSSRSGLLALPRGGSGQPGYGTQSSSNVVGDIDVRASTHKLNRKDNSADKGDTLRPEFSGDPDSEVENNKFAFSPGQLDKLLNPKNFGAFGAFGGLRGLENGLRTNVQSGLSMDETVLDGMVNFNEAVSRTFVPAPKSASPAPLAP.

A disordered region spans residues 1–72 (MAKPHCSSRS…FSGDPDSEVE (72 aa)). The segment covering 48-60 (RKDNSADKGDTLR) has biased composition (basic and acidic residues).

The polypeptide is Conidium-specific protein (SpoC1-C1D) (Emericella nidulans (strain FGSC A4 / ATCC 38163 / CBS 112.46 / NRRL 194 / M139) (Aspergillus nidulans)).